A 708-amino-acid polypeptide reads, in one-letter code: MSEHGIKWACEYCTYENWPSAIKCTMCRAQRPSGTIITEDPFKSGSSDVGRDWDPSSTEGGSSPLICPDSSARPRVKSSYSMENANKWSCHMCTYLNWPRAIRCTQCLSQRRTRSPTESPQSSGSGSRPVAFSVDPCEEYNDRNKLNTRTQHWTCSVCTYENWAKAKKCVVCDHPRPNNIEAIELAETEEASSIINEQDRARWRGGCSSGNSQRRSPPTTKRDSEVKMDFQRIELAGAVGTKEELEVDFKKLKQIKNRMKKTDWLFLNACVGVVEGDLAAIEAYKSSGGDIARQLTADEVRLLNRPSAFDVGYTLVHLAIRFQRQDMLAILLTEVSQQAAKCIPAMVCPELTEQIRREIAASLHQRKGDFACYFLTDLVTFTLPADIEDLPPTVQEKLFDEVLDRDVQKELEEESPIINWSLELATRLDSRLYALWNRTAGDCLLDSVLQATWGIYDKDSVLRKALHDSLHDCSHWFYTRWKDWESWYSQSFGLHFSLREEQWQEDWAFILSLASQPGASLEQTHIFVLAHILRRPIIVYGVKYYKSFRGETLGYTRFQGVYLPLLWEQSFCWKSPIALGYTRGHFSALVAMENDGYGNRGAGANLNTDDDVTITFLPLVDSERKLLHVHFLSAQELGNEEQQEKLLREWLDCCVTEGGVLVAMQKSSRRRNHPLVTQMVEKWLDRYRQIRPCTSLSDGEEDEDDEDE.

The segment at 3–33 (EHGIKWACEYCTYENWPSAIKCTMCRAQRPS) adopts a RanBP2-type 1 zinc-finger fold. 4 residues coordinate Zn(2+): Cys-10, Cys-13, Cys-24, and Cys-27. The interval 38 to 73 (TEDPFKSGSSDVGRDWDPSSTEGGSSPLICPDSSAR) is disordered. RanBP2-type zinc fingers lie at residues 84–113 (NANKWSCHMCTYLNWPRAIRCTQCLSQRRT) and 149–178 (RTQHWTCSVCTYENWAKAKKCVVCDHPRPN). Zn(2+) contacts are provided by Cys-90, Cys-93, Cys-104, Cys-107, Cys-155, Cys-158, Cys-169, and Cys-172. The disordered stretch occupies residues 202 to 224 (RWRGGCSSGNSQRRSPPTTKRDS). The segment covering 209-219 (SGNSQRRSPPT) has biased composition (polar residues). ANK repeat units lie at residues 260-290 (KKTDWLFLNACVGVVEGDLAAIEAYKSSGGD) and 313-340 (YTLVHLAIRFQRQDMLAILLTEVSQQAA). In terms of domain architecture, OTU spans 432 to 592 (LYALWNRTAG…RGHFSALVAM (161 aa)). Cys-443 acts as the Nucleophile in catalysis. His-585 functions as the Proton acceptor in the catalytic mechanism.

The protein belongs to the peptidase C64 family. As to quaternary structure, interacts with TRAF6. Interacts with APC.

Its subcellular location is the cytoplasm. It is found in the nucleus. The catalysed reaction is Thiol-dependent hydrolysis of ester, thioester, amide, peptide and isopeptide bonds formed by the C-terminal Gly of ubiquitin (a 76-residue protein attached to proteins as an intracellular targeting signal).. Functionally, ubiquitin thioesterase, which specifically hydrolyzes 'Lys-29'-linked and 'Lys-33'-linked diubiquitin. Also cleaves 'Lys-63'-linked chains, but with 40-fold less efficiency compared to 'Lys-29'-linked ones. Positive regulator of the Wnt signaling pathway that deubiquitinates APC protein, a negative regulator of Wnt-mediated transcription. Acts as a regulator of autophagy by mediating deubiquitination of PIK3C3/VPS34, thereby promoting autophagosome maturation. Plays a role in the regulation of cell morphology and cytoskeletal organization. Required in the stress fiber dynamics and cell migration. The polypeptide is Ubiquitin thioesterase Zranb1 (Mus musculus (Mouse)).